Reading from the N-terminus, the 210-residue chain is Mediator of RNA polymerase II transcription subunit 20 (210 aa).

The protein belongs to the Mediator complex subunit 20 family. As to quaternary structure, component of the Mediator complex, which is composed of at least 21 subunits that form three structurally distinct submodules. The Mediator head module contains MED6, MED8, MED11, SRB4/MED17, SRB5/MED18, ROX3/MED19, SRB2/MED20 and SRB6/MED22, the middle module contains MED1, MED4, NUT1/MED5, MED7, CSE2/MED9, NUT2/MED10, SRB7/MED21 and SOH1/MED31, and the tail module contains MED2, PGD1/MED3, RGR1/MED14, GAL11/MED15 and SIN4/MED16. The head and the middle modules interact directly with RNA polymerase II, whereas the elongated tail module interacts with gene-specific regulatory proteins. MED1 interacts directly with MED4 and MED7. SRB2/MED20 interacts directly with SRB4/MED17 and SRB5/MED18.

Its subcellular location is the nucleus. Component of the Mediator complex, a coactivator involved in the regulated transcription of nearly all RNA polymerase II-dependent genes. Mediator functions as a bridge to convey information from gene-specific regulatory proteins to the basal RNA polymerase II transcription machinery. The Mediator complex, having a compact conformation in its free form, is recruited to promoters by direct interactions with regulatory proteins and serves for the assembly of a functional preinitiation complex with RNA polymerase II and the general transcription factors. The Mediator complex unfolds to an extended conformation and partially surrounds RNA polymerase II, specifically interacting with the unphosphorylated form of the C-terminal domain (CTD) of RNA polymerase II. The Mediator complex dissociates from the RNA polymerase II holoenzyme and stays at the promoter when transcriptional elongation begins. This Saccharomyces cerevisiae (strain ATCC 204508 / S288c) (Baker's yeast) protein is Mediator of RNA polymerase II transcription subunit 20 (SRB2).